A 270-amino-acid chain; its full sequence is Fibroblast growth factor 5 (270 aa).

The N-terminal stretch at 1–20 (MSLSFLLLLFLSHLILSAWA) is a signal peptide. The tract at residues 25–86 (RLAPKGQPGP…EQSSFQWSPS (62 aa)) is disordered. Residues 41–69 (PGGASSRRSSSSTATSSSSPASSSSAASR) show a composition bias toward low complexity. Polar residues predominate over residues 76-86 (LEQSSFQWSPS). N-linked (GlcNAc...) asparagine glycosylation is present at Asn112. Positions 237 to 257 (EKKKPPNPVKPKVPLSAPRRS) are disordered.

Belongs to the heparin-binding growth factors family. In terms of assembly, interacts with FGFR1 and FGFR2. Affinity between fibroblast growth factors (FGFs) and their receptors is increased by heparan sulfate glycosaminoglycans that function as coreceptors.

It localises to the secreted. In terms of biological role, plays an important role in the regulation of cell proliferation and cell differentiation. Required for normal regulation of the hair growth cycle. Functions as an inhibitor of hair elongation by promoting progression from anagen, the growth phase of the hair follicle, into catagen the apoptosis-induced regression phase. This chain is Fibroblast growth factor 5 (FGF5), found in Bos taurus (Bovine).